The sequence spans 690 residues: Proprotein convertase subtilisin/kexin type 9 (690 aa).

An N-terminal signal peptide occupies residues 1–28 (MGTVSSRRSWWPLPLLLLLLLGPAGARA). Residues 29–150 (QEDEDGDYEE…IEEDSSVFAQ (122 aa)) constitute a propeptide that is removed on maturation. At Y36 the chain carries Sulfotyrosine. The residue at position 45 (S45) is a Phosphoserine. The 73-residue stretch at 75-147 (TYVVVLKEET…VDYIEEDSSV (73 aa)) folds into the Inhibitor I9 domain. One can recognise a Peptidase S8 domain in the interval 153–459 (PWNLERITPP…GWQLFCRTVW (307 aa)). Catalysis depends on charge relay system residues D184 and H224. Cystine bridges form between C221/C253 and C321/C356. Residue S384 is the Charge relay system of the active site. Residues 448–690 (GAGWQLFCRT…HLAQASQELQ (243 aa)) are C-terminal domain. 3 disulfides stabilise this stretch: C455–C525, C475–C524, and C484–C507. Residue N531 is glycosylated (N-linked (GlcNAc...) asparagine). 6 disulfides stabilise this stretch: C532-C599, C550-C598, C560-C586, C606-C677, C624-C676, and C633-C652. At S686 the chain carries Phosphoserine.

It belongs to the peptidase S8 family. As to quaternary structure, monomer. Can self-associate to form dimers and higher multimers which may have increased LDLR degrading activity. The precursor protein but not the mature protein may form multimers. Interacts with APOB, VLDLR, LRP8/APOER2 and BACE1. The full-length immature form (pro-PCSK9) interacts with SCNN1A, SCNN1B and SCNN1G. The pro-PCSK9 form (via C-terminal domain) interacts with LDLR. Interacts (via the C-terminal domain) with ANXA2 (via repeat Annexin 1); the interaction inhibits the degradation of LDLR. Ca(2+) serves as cofactor. Cleavage by furin and PCSK5 generates a truncated inactive protein that is unable to induce LDLR degradation. In terms of processing, undergoes autocatalytic cleavage in the endoplasmic reticulum to release the propeptide from the N-terminus and the cleavage of the propeptide is strictly required for its maturation and activation. The cleaved propeptide however remains associated with the catalytic domain through non-covalent interactions, preventing potential substrates from accessing its active site. As a result, it is secreted from cells as a propeptide-containing, enzymatically inactive protein. Post-translationally, phosphorylation protects the propeptide against proteolysis.

The protein resides in the cytoplasm. Its subcellular location is the secreted. It is found in the endosome. It localises to the lysosome. The protein localises to the cell surface. The protein resides in the endoplasmic reticulum. Its subcellular location is the golgi apparatus. Its proteolytic activity is autoinhibited by the non-covalent binding of the propeptide to the catalytic domain. Inhibited by EGTA. Functionally, crucial player in the regulation of plasma cholesterol homeostasis. Binds to low-density lipid receptor family members: low density lipoprotein receptor (LDLR), very low density lipoprotein receptor (VLDLR), apolipoprotein E receptor (LRP1/APOER) and apolipoprotein receptor 2 (LRP8/APOER2), and promotes their degradation in intracellular acidic compartments. Acts via a non-proteolytic mechanism to enhance the degradation of the hepatic LDLR through a clathrin LDLRAP1/ARH-mediated pathway. May prevent the recycling of LDLR from endosomes to the cell surface or direct it to lysosomes for degradation. Can induce ubiquitination of LDLR leading to its subsequent degradation. Inhibits intracellular degradation of APOB via the autophagosome/lysosome pathway in a LDLR-independent manner. Involved in the disposal of non-acetylated intermediates of BACE1 in the early secretory pathway. Inhibits epithelial Na(+) channel (ENaC)-mediated Na(+) absorption by reducing ENaC surface expression primarily by increasing its proteasomal degradation. Regulates neuronal apoptosis via modulation of LRP8/APOER2 levels and related anti-apoptotic signaling pathways. This chain is Proprotein convertase subtilisin/kexin type 9 (PCSK9), found in Pongo pygmaeus (Bornean orangutan).